Reading from the N-terminus, the 425-residue chain is Proline iminopeptidase (425 aa).

Residues 52–315 (PWLLYLQGGP…EFPALAWAQG (264 aa)) enclose the AB hydrolase-1 domain. Serine 146 (nucleophile) is an active-site residue. The active site involves aspartate 351. The Proton donor role is filled by histidine 404.

Belongs to the peptidase S33 family. As to quaternary structure, homotetramer.

The protein localises to the cytoplasm. The enzyme catalyses Release of N-terminal proline from a peptide.. Its function is as follows. Higher activity toward long peptides. Acts on hydroxyproline beta-naphthylamide with almost as high an activity as on proline beta-naphthylamide. The sequence is that of Proline iminopeptidase (pip) from Aeromonas sobria.